We begin with the raw amino-acid sequence, 274 residues long: NH(3)-dependent NAD(+) synthetase (274 aa).

Residue 46-53 (GISGGQDS) coordinates ATP. Aspartate 52 is a binding site for Mg(2+). Residue arginine 140 coordinates deamido-NAD(+). Position 160 (threonine 160) interacts with ATP. Glutamate 165 serves as a coordination point for Mg(2+). Positions 173 and 180 each coordinate deamido-NAD(+). Lysine 189 and threonine 211 together coordinate ATP. 260–261 (HK) lines the deamido-NAD(+) pocket.

The protein belongs to the NAD synthetase family. Homodimer.

The enzyme catalyses deamido-NAD(+) + NH4(+) + ATP = AMP + diphosphate + NAD(+) + H(+). It participates in cofactor biosynthesis; NAD(+) biosynthesis; NAD(+) from deamido-NAD(+) (ammonia route): step 1/1. Functionally, catalyzes the ATP-dependent amidation of deamido-NAD to form NAD. Uses ammonia as a nitrogen source. In Streptococcus pyogenes serotype M3 (strain ATCC BAA-595 / MGAS315), this protein is NH(3)-dependent NAD(+) synthetase.